The following is a 205-amino-acid chain: Photosystem I assembly protein Ycf4 (205 aa).

2 helical membrane passes run 23-43 (WATV…SSYI) and 86-106 (LMCF…CLIF).

It belongs to the Ycf4 family.

The protein resides in the plastid. Its subcellular location is the chloroplast thylakoid membrane. Seems to be required for the assembly of the photosystem I complex. This Tetradesmus obliquus (Green alga) protein is Photosystem I assembly protein Ycf4.